A 285-amino-acid chain; its full sequence is tRNA (guanine-N(7)-)-methyltransferase (285 aa).

S-adenosyl-L-methionine is bound by residues Gly102, 125 to 126 (EI), 160 to 161 (NA), and Cys180. Residue Asp183 is part of the active site. 258–260 (TEE) serves as a coordination point for S-adenosyl-L-methionine.

It belongs to the class I-like SAM-binding methyltransferase superfamily. TrmB family. As to quaternary structure, forms a complex with TRM82.

The protein resides in the nucleus. It catalyses the reaction guanosine(46) in tRNA + S-adenosyl-L-methionine = N(7)-methylguanosine(46) in tRNA + S-adenosyl-L-homocysteine. The protein operates within tRNA modification; N(7)-methylguanine-tRNA biosynthesis. Its function is as follows. Catalyzes the formation of N(7)-methylguanine at position 46 (m7G46) in tRNA. The chain is tRNA (guanine-N(7)-)-methyltransferase from Candida glabrata (strain ATCC 2001 / BCRC 20586 / JCM 3761 / NBRC 0622 / NRRL Y-65 / CBS 138) (Yeast).